Here is a 434-residue protein sequence, read N- to C-terminus: Putative ZDHHC-type palmitoyltransferase 1 (434 aa).

Helical transmembrane passes span 25–45 (AYFI…LIFV) and 53–73 (ITAA…IFLI). The DHHC domain occupies 115-165 (KWCETCCLYRPPRANHCGICNNCVERFDHHCPWVGNCIGRRNYQTFLYFLY). Cys145 serves as the catalytic S-palmitoyl cysteine intermediate. Residues 160 to 180 (FLYFLYSLGFLCIWIMGFCVA) traverse the membrane as a helical segment. 9 N-linked (GlcNAc...) asparagine glycosylation sites follow: Asn207, Asn216, Asn274, Asn346, Asn362, Asn373, Asn381, Asn387, and Asn393. Residues 262 to 330 (TIPTPNNING…ISPPQMLQRQ (69 aa)) are disordered. The segment covering 267 to 316 (NNINGNNNNSINNNNNNNNNNNNNNNNNNNNNNNNNNINNGNSGGTTNNG) has biased composition (low complexity). Residues 365–434 (TISEDKPKNL…SLNHELQVNV (70 aa)) form a disordered region. Over residues 373 to 387 (NLSNSNNNNNTNNKN) the composition is skewed to low complexity. The segment covering 409-419 (DDFKSDNDKEI) has biased composition (basic and acidic residues). An N-linked (GlcNAc...) asparagine glycan is attached at Asn420. The segment covering 420–434 (NSSSLSLNHELQVNV) has biased composition (polar residues).

The protein belongs to the DHHC palmitoyltransferase family.

It is found in the membrane. It catalyses the reaction L-cysteinyl-[protein] + hexadecanoyl-CoA = S-hexadecanoyl-L-cysteinyl-[protein] + CoA. The chain is Putative ZDHHC-type palmitoyltransferase 1 from Dictyostelium discoideum (Social amoeba).